The sequence spans 146 residues: Ribonuclease H (146 aa).

The 143-residue stretch at 1 to 143 (MQKKITIYTD…CDELARQAIQ (143 aa)) folds into the RNase H type-1 domain. Mg(2+) contacts are provided by Asp-10, Glu-48, Asp-70, and Asp-135.

It belongs to the RNase H family. As to quaternary structure, monomer. It depends on Mg(2+) as a cofactor.

It localises to the cytoplasm. The catalysed reaction is Endonucleolytic cleavage to 5'-phosphomonoester.. Endonuclease that specifically degrades the RNA of RNA-DNA hybrids. This chain is Ribonuclease H, found in Chlorobium luteolum (strain DSM 273 / BCRC 81028 / 2530) (Pelodictyon luteolum).